A 215-amino-acid chain; its full sequence is MNKDQSKIPQATAKRLPLYYRFLKNLHASGKQRVSSAELSDAVKVDSATIRRDFSYFGALGKKGYGYNVDYLLSFFRKTLDQDEMTDVILIGVGNLGTAFLHYNFTKNNNTKISMAFDINESKIGTEVGGVPVYNLDDLEQHVKDESVAILTVPAVAAQSITDRLVALGIKGILNFTPARLNVPEHIRIHHIDLAVELQSLVYFLKHYSVLEEIE.

The H-T-H motif DNA-binding region spans 18–57 (LYYRFLKNLHASGKQRVSSAELSDAVKVDSATIRRDFSYF). An NAD(+)-binding site is contributed by 92 to 97 (GVGNLG).

It belongs to the transcriptional regulatory Rex family. Homodimer.

The protein resides in the cytoplasm. Its function is as follows. Modulates transcription in response to changes in cellular NADH/NAD(+) redox state. This chain is Redox-sensing transcriptional repressor Rex, found in Bacillus subtilis (strain 168).